The following is a 148-amino-acid chain: Calmodulin-related protein 97A (148 aa).

4 EF-hand domains span residues 7–42, 43–78, 80–115, and 116–148; these read EQIA…LGQN, PTEA…QMRE, DTEE…LGEK, and VTDE…ISQK. Ca(2+) is bound by residues Asp-20, Thr-24, Lys-26, Glu-31, Asn-58, Asn-60, Gln-62, Glu-67, Asp-93, Asp-95, Asp-97, Glu-104, Asp-129, Asp-131, Asp-133, Met-135, and Glu-140.

The protein belongs to the calmodulin family.

In terms of biological role, may be involved in calcium-mediated signal transduction. The chain is Calmodulin-related protein 97A (Acam) from Drosophila melanogaster (Fruit fly).